Reading from the N-terminus, the 102-residue chain is Large ribosomal subunit protein bL21 (102 aa).

The protein belongs to the bacterial ribosomal protein bL21 family. Part of the 50S ribosomal subunit. Contacts protein L20.

In terms of biological role, this protein binds to 23S rRNA in the presence of protein L20. This Geobacillus sp. (strain WCH70) protein is Large ribosomal subunit protein bL21.